The primary structure comprises 773 residues: MESRTLSLLEFPKVLDRLAGYAASEPAAAACRALGPMGDAARLATEQRKLVEALELRRDRAFEFTAFPDIEPLFAVLESERRVLDLDALVALSHVLSRVAALREALGREEGDSVLGAIVYRTPWAKKTQAALARCLGPDGRLKDESSPELFSVRQEIRSIHQTILTKVKEFISERELGPLLQDDYVTISSDRYVLPLRANFKGRLPGVIHDYSQTGETIYVEPFFLVEINNRLQELKNEEREAEARVMAFLTGLARDERREVAASYRLLVDCDVLWAKAALCDAFGGTLPEVAQGRAVRLLAARHPLLALAGPDSAVAQDLELAPDQRALIVTGANAGGKTVCLKTLGLLAAMALSGLPVPAGEGSSLPFFAKIFVFLGDEQSLEDHLSTFTAQIRHLSRVWPDIDADTLVLLDEFGAGTDPSQGAALAQAVVDGLLDRGAYLAAATHFPALKAYGLSREGVRAACMLFDPATKKPLYRLAYDQVGASIALDVAREHGLPEDILERANRYLLLDGNDTGLVFDRLNDLALRREHELEAIAAKRLAEEGKIQKLKDNLKKAQDKLVEEIRELSRDIVRRHEAGRLGRKEAQKALADVRKRLIDESNELTGGPGGEAAAVAFDLSVVAPGDSVQVTSWNKIGVVREKDLKRQAAKVDIGGVSLWVNVADLAPAAGKPAKAGGGAVVTPTASEAKGLGLVVDLRGMRADVAESELLAFVDNALLRGHGELEVIHGRGTGALRREVHRMLKDHPQVASFAIAPEDRGGDGMTMVTLK.

ATP is bound at residue 334–341 (GANAGGKT). The region spanning 698–773 (VDLRGMRADV…GDGMTMVTLK (76 aa)) is the Smr domain.

This sequence belongs to the DNA mismatch repair MutS family. MutS2 subfamily. In terms of assembly, homodimer. Binds to stalled ribosomes, contacting rRNA.

Its function is as follows. Endonuclease that is involved in the suppression of homologous recombination and thus may have a key role in the control of bacterial genetic diversity. Functionally, acts as a ribosome collision sensor, splitting the ribosome into its 2 subunits. Detects stalled/collided 70S ribosomes which it binds and splits by an ATP-hydrolysis driven conformational change. Acts upstream of the ribosome quality control system (RQC), a ribosome-associated complex that mediates the extraction of incompletely synthesized nascent chains from stalled ribosomes and their subsequent degradation. Probably generates substrates for RQC. The sequence is that of Endonuclease MutS2 from Solidesulfovibrio magneticus (strain ATCC 700980 / DSM 13731 / RS-1) (Desulfovibrio magneticus).